The sequence spans 349 residues: MDKRGGMDHVLVWRQGRFSRQINLTTVGRVSLALLLVLAVMVASLGVGKLMLSPWEVLRALWSSQPEGAALIVQQLRLPRVVLAALVGGALAVSGLILQAMIRNPLASPDILGITSGASAAAVFYLSFLAATLGAHYLPLAAMIGAATAALAVYWLAWQAGVSPQRLVLTGVGVSALLMAATTFMLVFSPLTTTLSAYVWLTGSVYGASWRETRELGGWLLLIAPWLVLLARQVRVQQLDDGLAQGIGVRVQWLRVALLLLSVALAGAAIAWGGAMAFVGLIAPHIAKRLVAPGFAGQAAMAFLSGAGLVMVADLCGRTLFLPLDLPAGIFVSALGAPFFLYLLIKQRH.

The next 10 membrane-spanning stretches (helical) occupy residues 32 to 52 (LALLLVLAVMVASLGVGKLML), 82 to 102 (VLAALVGGALAVSGLILQAMI), 111 to 131 (ILGITSGASAAAVFYLSFLAA), 138 to 158 (LPLAAMIGAATAALAVYWLAW), 168 to 188 (VLTGVGVSALLMAATTFMLVF), 190 to 210 (PLTTTLSAYVWLTGSVYGASW), 216 to 236 (LGGWLLLIAPWLVLLARQVRV), 263 to 283 (VALAGAAIAWGGAMAFVGLIA), 290 to 310 (LVAPGFAGQAAMAFLSGAGLV), and 325 to 345 (DLPAGIFVSALGAPFFLYLLI).

Belongs to the binding-protein-dependent transport system permease family. FecCD subfamily.

Its subcellular location is the cell inner membrane. Part of the binding-protein-dependent transport system CbrABCD for uptake of the siderophore achromobactin. Probably responsible for the translocation of the substrate across the membrane. This Dickeya dadantii (strain 3937) (Erwinia chrysanthemi (strain 3937)) protein is Achromobactin transport system permease protein CbrC (cbrC).